The following is a 468-amino-acid chain: 6-phosphogluconate dehydrogenase, decarboxylating (468 aa).

NADP(+)-binding positions include 9–14 (GLAVMG), 32–34 (NRS), 73–75 (VQA), and Asn101. Substrate is bound by residues Asn101 and 127–129 (SGG). Catalysis depends on Lys182, which acts as the Proton acceptor. A substrate-binding site is contributed by 185-186 (HN). Glu189 (proton donor) is an active-site residue. Tyr190, Lys259, Arg286, Arg444, and His450 together coordinate substrate.

Belongs to the 6-phosphogluconate dehydrogenase family. As to quaternary structure, homodimer.

It catalyses the reaction 6-phospho-D-gluconate + NADP(+) = D-ribulose 5-phosphate + CO2 + NADPH. Its pathway is carbohydrate degradation; pentose phosphate pathway; D-ribulose 5-phosphate from D-glucose 6-phosphate (oxidative stage): step 3/3. Its function is as follows. Catalyzes the oxidative decarboxylation of 6-phosphogluconate to ribulose 5-phosphate and CO(2), with concomitant reduction of NADP to NADPH. This Staphylococcus aureus (strain COL) protein is 6-phosphogluconate dehydrogenase, decarboxylating (gnd).